The chain runs to 120 residues: Small ribosomal subunit protein uS13 (120 aa).

Residues histidine 92–lysine 120 form a disordered region. The span at alanine 107–lysine 120 shows a compositional bias: basic residues.

Belongs to the universal ribosomal protein uS13 family. As to quaternary structure, part of the 30S ribosomal subunit. Forms a loose heterodimer with protein S19. Forms two bridges to the 50S subunit in the 70S ribosome.

In terms of biological role, located at the top of the head of the 30S subunit, it contacts several helices of the 16S rRNA. In the 70S ribosome it contacts the 23S rRNA (bridge B1a) and protein L5 of the 50S subunit (bridge B1b), connecting the 2 subunits; these bridges are implicated in subunit movement. Contacts the tRNAs in the A and P-sites. This chain is Small ribosomal subunit protein uS13, found in Helicobacter hepaticus (strain ATCC 51449 / 3B1).